Consider the following 172-residue polypeptide: Transmembrane protein 91 (172 aa).

Over 1-97 (MDNSSIQELQ…SPLLPHDHLG (97 aa)) the chain is Extracellular. A disordered region spans residues 60–86 (GLGEPETPDFEDTLSSDSDSDDDGGDR). The span at 65–83 (ETPDFEDTLSSDSDSDDDG) shows a compositional bias: acidic residues. Residues 98 to 118 (LAVFSVLCCFWPVGIAAFCLA) traverse the membrane as a helical segment. The Cytoplasmic portion of the chain corresponds to 119-139 (HKTNKAWAKGDVQGAGAASRR). The helical transmembrane segment at 140 to 160 (AFLLGVLAVGLGLCTYAAALV) threads the bilayer. Residues 161–172 (TLAAYLASRDPP) are Extracellular-facing.

This sequence belongs to the CD225/Dispanin family.

The protein resides in the membrane. This is Transmembrane protein 91 (Tmem91) from Mus musculus (Mouse).